Reading from the N-terminus, the 118-residue chain is MTKNIHDVAYELQKAIAENEDFKTLKESYAAVQADAASKNLFDEFRTMQLSLQQKMMQGQEITEEDNQQAQEVVARIQQDAKITKLMETEQRLNVVIGDVNKIIMKPLEELYSAQQQA.

It belongs to the UPF0342 family.

This chain is UPF0342 protein BCG9842_B4422, found in Bacillus cereus (strain G9842).